The primary structure comprises 459 residues: Ribulose bisphosphate carboxylase (459 aa).

Residue Asn-111 participates in substrate binding. Residue Lys-166 is the Proton acceptor of the active site. Residue Lys-168 participates in substrate binding. Mg(2+) contacts are provided by Lys-191, Asp-193, and Glu-194. At Lys-191 the chain carries N6-carboxylysine. The active-site Proton acceptor is His-287. Substrate-binding residues include Arg-288, His-321, and Ser-368.

It belongs to the RuBisCO large chain family. Type II subfamily. As to quaternary structure, homodimer. The cofactor is Mg(2+).

The catalysed reaction is 2 (2R)-3-phosphoglycerate + 2 H(+) = D-ribulose 1,5-bisphosphate + CO2 + H2O. It catalyses the reaction D-ribulose 1,5-bisphosphate + O2 = 2-phosphoglycolate + (2R)-3-phosphoglycerate + 2 H(+). Its function is as follows. RuBisCO catalyzes two reactions: the carboxylation of D-ribulose 1,5-bisphosphate, the primary event in carbon dioxide fixation, as well as the oxidative fragmentation of the pentose substrate. Both reactions occur simultaneously and in competition at the same active site. The protein is Ribulose bisphosphate carboxylase of Cereibacter sphaeroides (Rhodobacter sphaeroides).